Reading from the N-terminus, the 129-residue chain is Large ribosomal subunit protein uL22 (129 aa).

It belongs to the universal ribosomal protein uL22 family. In terms of assembly, part of the 50S ribosomal subunit.

Its function is as follows. This protein binds specifically to 23S rRNA; its binding is stimulated by other ribosomal proteins, e.g. L4, L17, and L20. It is important during the early stages of 50S assembly. It makes multiple contacts with different domains of the 23S rRNA in the assembled 50S subunit and ribosome. Functionally, the globular domain of the protein is located near the polypeptide exit tunnel on the outside of the subunit, while an extended beta-hairpin is found that lines the wall of the exit tunnel in the center of the 70S ribosome. This Mesorhizobium japonicum (strain LMG 29417 / CECT 9101 / MAFF 303099) (Mesorhizobium loti (strain MAFF 303099)) protein is Large ribosomal subunit protein uL22.